We begin with the raw amino-acid sequence, 191 residues long: ATP synthase subunit delta (191 aa).

Belongs to the ATPase delta chain family. As to quaternary structure, F-type ATPases have 2 components, F(1) - the catalytic core - and F(0) - the membrane proton channel. F(1) has five subunits: alpha(3), beta(3), gamma(1), delta(1), epsilon(1). F(0) has three main subunits: a(1), b(2) and c(10-14). The alpha and beta chains form an alternating ring which encloses part of the gamma chain. F(1) is attached to F(0) by a central stalk formed by the gamma and epsilon chains, while a peripheral stalk is formed by the delta and b chains.

The protein resides in the cell inner membrane. Its function is as follows. F(1)F(0) ATP synthase produces ATP from ADP in the presence of a proton or sodium gradient. F-type ATPases consist of two structural domains, F(1) containing the extramembraneous catalytic core and F(0) containing the membrane proton channel, linked together by a central stalk and a peripheral stalk. During catalysis, ATP synthesis in the catalytic domain of F(1) is coupled via a rotary mechanism of the central stalk subunits to proton translocation. In terms of biological role, this protein is part of the stalk that links CF(0) to CF(1). It either transmits conformational changes from CF(0) to CF(1) or is implicated in proton conduction. In Halothermothrix orenii (strain H 168 / OCM 544 / DSM 9562), this protein is ATP synthase subunit delta.